The chain runs to 735 residues: Protostadienol synthase A (735 aa).

Residues 129–170 (KNEMIRYLLNFVNEDGGWGLWINSPSTVFGTTMNYTMLRILG) form a PFTB 1 repeat. The active-site Proton donor is Asp460. PFTB repeat units follow at residues 487 to 528 (LAEA…YDNV), 564 to 604 (MARC…ETVG), and 613 to 660 (CRNA…ALMG).

This sequence belongs to the terpene cyclase/mutase family.

The catalysed reaction is (S)-2,3-epoxysqualene = (17Z)-protosta-17(20),24-dien-3beta-ol. In terms of biological role, protostadienol synthase which cyclizes (3S)-oxidosqualene to (17Z)-protosta-17(20),24-dien-3-beta-ol (protostadienol), the biosynthetic precursor of helvolic acid, a secondary metabolite which promotes virulence. This chain is Protostadienol synthase A (PDSA), found in Arthroderma gypseum (strain ATCC MYA-4604 / CBS 118893) (Microsporum gypseum).